The following is a 21-amino-acid chain: Cardiotoxin-like basic polypeptide ah (21 aa).

Belongs to the three-finger toxin family. Short-chain subfamily. Orphan group XV sub-subfamily. Post-translationally, contains 4 disulfide bonds. Expressed by the venom gland.

It is found in the secreted. The protein localises to the target cell membrane. In terms of biological role, has hemolytic activity under low-lecithin conditions. Has low cytotoxic activity. Inhibits the expression of VEGF and bFGF in human non-small-cell lung cancer cell line NCI-H1299 in a dose-dependent manner. The protein is Cardiotoxin-like basic polypeptide ah of Naja atra (Chinese cobra).